The sequence spans 509 residues: Cytochrome P450 monooxygenase ORF9 (509 aa).

Transmembrane regions (helical) follow at residues 20-40 and 309-329; these read IYVL…GLIV and LIIA…YYLL. N-linked (GlcNAc...) asparagine glycosylation occurs at Asn353. Cys448 is a heme binding site.

The protein belongs to the cytochrome P450 family. Requires heme as cofactor.

The protein localises to the membrane. It functions in the pathway sesquiterpene biosynthesis. Cytochrome P450 monooxygenase; part of the gene cluster that mediates the biosynthesis of PR-toxin, a bicyclic sesquiterpene belonging to the eremophilane class and acting as a mycotoxin. The first step of the pathway is catalyzed by the aristolochene synthase which performs the cyclization of trans,trans-farnesyl diphosphate (FPP) to the bicyclic sesquiterpene aristolochene. Following the formation of aristolochene, the non-oxygenated aristolochene is converted to the trioxygenated intermediate eremofortin B, via 7-epi-neopetasone. This conversion appears to involve three enzymes, a hydroxysterol oxidase-like enzyme, the quinone-oxidase prx3 that forms the quinone-type-structure in the bicyclic nucleus of aristolochene with the C8-oxo group and the C-3 hydroxyl group, and the P450 monooxygenase ORF6 that introduces the epoxide at the double bond between carbons 1 and 2. No monoxy or dioxy-intermediates have been reported to be released to the broth, so these three early oxidative reactions may be coupled together. Eremofortin B is further oxidized by another P450 monooxygenase, that introduces a second epoxide between carbons 7 and 11 prior to acetylation to eremofortin A by the acetyltransferase ORF8. The second epoxidation may be performed by a second P450 monooxygenase. After the acetylation step, eremofortin A is converted to eremofortin C and then to PR-toxin. First the conversion of eremofortin A to eremofortin C proceeds by oxidation of the side chain of the molecule at C-12 and is catalyzed by the short-chain oxidoreductase prx1. The cytochrome P450 monooxygenase ORF6 is probably also involved in this step. The primary alcohol formed at C-12 is finally oxidized by the short-chain alcohol dehydrogenase prx4 that forms PR-toxin. In Penicillium roqueforti (strain FM164), this protein is Cytochrome P450 monooxygenase ORF9.